Here is a 151-residue protein sequence, read N- to C-terminus: Large ribosomal subunit protein uL13 (151 aa).

Positions 129–151 (SNHPHQAQKPETLTINTIPGGNN) are disordered.

The protein belongs to the universal ribosomal protein uL13 family. As to quaternary structure, part of the 50S ribosomal subunit.

In terms of biological role, this protein is one of the early assembly proteins of the 50S ribosomal subunit, although it is not seen to bind rRNA by itself. It is important during the early stages of 50S assembly. This Gloeothece citriformis (strain PCC 7424) (Cyanothece sp. (strain PCC 7424)) protein is Large ribosomal subunit protein uL13.